We begin with the raw amino-acid sequence, 359 residues long: 3-dehydroquinate synthase (359 aa).

NAD(+) contacts are provided by residues 69–74 (DGEKYK), 103–107 (GVVGD), 127–128 (TT), K140, K149, and 167–170 (TLDT). E182, H245, and H262 together coordinate Zn(2+).

The protein belongs to the sugar phosphate cyclases superfamily. Dehydroquinate synthase family. Requires Co(2+) as cofactor. Zn(2+) is required as a cofactor. The cofactor is NAD(+).

The protein resides in the cytoplasm. It carries out the reaction 7-phospho-2-dehydro-3-deoxy-D-arabino-heptonate = 3-dehydroquinate + phosphate. It participates in metabolic intermediate biosynthesis; chorismate biosynthesis; chorismate from D-erythrose 4-phosphate and phosphoenolpyruvate: step 2/7. In terms of biological role, catalyzes the conversion of 3-deoxy-D-arabino-heptulosonate 7-phosphate (DAHP) to dehydroquinate (DHQ). This is 3-dehydroquinate synthase from Ruthia magnifica subsp. Calyptogena magnifica.